Here is a 609-residue protein sequence, read N- to C-terminus: Phosphoprotein 85 (609 aa).

The tract at residues 461–609 (QNEGRASSRA…RSTETNDERL (149 aa)) is disordered. Over residues 465–478 (RASSRASSSHSTST) the composition is skewed to low complexity. The span at 484–495 (PQSGRSTPTSIL) shows a compositional bias: polar residues. 2 stretches are compositionally biased toward low complexity: residues 503 to 513 (SNSRSSSVSFS) and 552 to 563 (SPQSASSNNSMS). A compositionally biased stretch (basic and acidic residues) spans 600–609 (RSTETNDERL).

Belongs to the herpesviridae pp85 family. Phosphorylated.

Its subcellular location is the virion tegument. The protein resides in the host cytoplasm. In Homo sapiens (Human), this protein is Phosphoprotein 85 (U14).